The chain runs to 857 residues: KH domain-containing protein HEN4 (857 aa).

The span at 1 to 15 (MERNSVKFHAEKRSG) shows a compositional bias: basic and acidic residues. The interval 1-27 (MERNSVKFHAEKRSGAFDPGSGFGSSK) is disordered. 4 consecutive KH domains span residues 46-110 (HAAF…KLGA), 149-217 (TVVC…LVSI), 451-521 (DVVF…IMLI), and 541-610 (SITA…IFHI). Residues 644-755 (SDNPLSIGSH…RGLSDASGGL (112 aa)) form a disordered region. Composition is skewed to polar residues over residues 645-665 (DNPL…NSSS) and 673-688 (SFLS…SRSV). Over residues 718-730 (FTMDHSDNSHHLT) the composition is skewed to basic and acidic residues. Over residues 746-755 (RGLSDASGGL) the composition is skewed to low complexity. Residues 775–839 (NTTVEIRVPA…DQTQAAQNLL (65 aa)) enclose the KH 5 domain.

Interacts with HUA1. Interacts with FLK and PEP.

It localises to the nucleus speckle. Functions in floral reproductive organ identity in the third whorl and floral determinacy specification by specifically promoting the processing of AGAMOUS (AG) pre-mRNA. Functions in association with HUA1 and HUA2. This chain is KH domain-containing protein HEN4, found in Arabidopsis thaliana (Mouse-ear cress).